We begin with the raw amino-acid sequence, 283 residues long: NAD kinase (283 aa).

The active-site Proton acceptor is Asp-61. NAD(+)-binding positions include 61-62, 134-135, Arg-145, Asp-164, 175-180, and Gln-234; these read DG, ND, and TAYNLS.

The protein belongs to the NAD kinase family. The cofactor is a divalent metal cation.

It localises to the cytoplasm. It catalyses the reaction NAD(+) + ATP = ADP + NADP(+) + H(+). Involved in the regulation of the intracellular balance of NAD and NADP, and is a key enzyme in the biosynthesis of NADP. Catalyzes specifically the phosphorylation on 2'-hydroxyl of the adenosine moiety of NAD to yield NADP. In Clostridium kluyveri (strain NBRC 12016), this protein is NAD kinase.